The primary structure comprises 142 residues: Succinate dehydrogenase subunit 6, mitochondrial (142 aa).

In terms of assembly, component of complex II composed of eight subunits in plants: four classical SDH subunits SDH1, SDH2, SDH3 and SDH4 (a flavoprotein (FP), an iron-sulfur protein (IP), and a cytochrome b composed of a large and a small subunit.), as well as four subunits unknown in mitochondria from bacteria and heterotrophic eukaryotes.

It localises to the mitochondrion inner membrane. It functions in the pathway carbohydrate metabolism; tricarboxylic acid cycle. The sequence is that of Succinate dehydrogenase subunit 6, mitochondrial from Oryza sativa subsp. japonica (Rice).